Reading from the N-terminus, the 132-residue chain is Sec-independent protein translocase protein TatB (132 aa).

Residues 2–22 traverse the membrane as a helical segment; the sequence is FDGIGFMELLLIGILGLVVLG. Polar residues-rich tracts occupy residues 86-95 and 116-132; these read LKQAAQSVNR and IAETPTQSGDTHSKNNG. Residues 86–132 form a disordered region; that stretch reads LKQAAQSVNRPYQLDESNEQEPKIAPPQANIAETPTQSGDTHSKNNG.

It belongs to the TatB family. The Tat system comprises two distinct complexes: a TatABC complex, containing multiple copies of TatA, TatB and TatC subunits, and a separate TatA complex, containing only TatA subunits. Substrates initially bind to the TatABC complex, which probably triggers association of the separate TatA complex to form the active translocon.

It localises to the cell inner membrane. Its function is as follows. Part of the twin-arginine translocation (Tat) system that transports large folded proteins containing a characteristic twin-arginine motif in their signal peptide across membranes. Together with TatC, TatB is part of a receptor directly interacting with Tat signal peptides. TatB may form an oligomeric binding site that transiently accommodates folded Tat precursor proteins before their translocation. This is Sec-independent protein translocase protein TatB from Shewanella denitrificans (strain OS217 / ATCC BAA-1090 / DSM 15013).